A 572-amino-acid polypeptide reads, in one-letter code: Triacylglycerol lipase OBL1 (572 aa).

Residues 110–130 (GYLVEFFLNLFSLNGNFLGLL) traverse the membrane as a helical segment. Residues 320-356 (IPPSESSKSSTSFSDSDAHTGSDLSSDSERPTDTRKK) are disordered. The segment covering 323–334 (SESSKSSTSFSD) has biased composition (low complexity). Residues 346–356 (DSERPTDTRKK) show a composition bias toward basic and acidic residues. The GXSXG motif lies at 391–395 (GHSLG). Catalysis depends on S393, which acts as the Nucleophile. Catalysis depends on charge relay system residues D457 and H550.

The protein belongs to the AB hydrolase superfamily. Lipase family. In terms of tissue distribution, expressed in pollen grains and pollen tubes.

It localises to the lipid droplet. The protein localises to the membrane. It carries out the reaction 1,2-di-(9Z-octadecenoyl)-glycerol + (9Z)-octadecenoate + H(+) = 1,2,3-tri-(9Z-octadecenoyl)-glycerol + H2O. The enzyme catalyses 1-(9Z-octadecenoyl)-glycerol + H2O = glycerol + (9Z)-octadecenoate + H(+). In terms of biological role, acid lipase that can hydrolyze a range of triacylglycerols without a clear preference for acyl-chains. Can also cleave 1,2-diacylglycerol, 1,3-diacylglycerol and 1-monoacylglycerol, but not phosphatidylcholine, phosphatidylethanolamine, or sterol esters. Required for pollen tube growth. Triacylglycerol hydrolysis by OBL1 may provide acyl groups for the synthesis of membrane lipids in growing pollen tubes. This Nicotiana tabacum (Common tobacco) protein is Triacylglycerol lipase OBL1.